The sequence spans 466 residues: tRNA(Ile)-lysidine synthase (466 aa).

26 to 31 (SGGSDS) is a binding site for ATP.

It belongs to the tRNA(Ile)-lysidine synthase family.

Its subcellular location is the cytoplasm. The catalysed reaction is cytidine(34) in tRNA(Ile2) + L-lysine + ATP = lysidine(34) in tRNA(Ile2) + AMP + diphosphate + H(+). In terms of biological role, ligates lysine onto the cytidine present at position 34 of the AUA codon-specific tRNA(Ile) that contains the anticodon CAU, in an ATP-dependent manner. Cytidine is converted to lysidine, thus changing the amino acid specificity of the tRNA from methionine to isoleucine. The polypeptide is tRNA(Ile)-lysidine synthase (Oceanobacillus iheyensis (strain DSM 14371 / CIP 107618 / JCM 11309 / KCTC 3954 / HTE831)).